The sequence spans 207 residues: Large ribosomal subunit protein uL4 (207 aa).

Positions 45–57 (RQGTHSVKNRSTV) are enriched in polar residues. The tract at residues 45–77 (RQGTHSVKNRSTVSGGGRKPWRQKGTGNARQGS) is disordered.

It belongs to the universal ribosomal protein uL4 family. Part of the 50S ribosomal subunit.

Functionally, one of the primary rRNA binding proteins, this protein initially binds near the 5'-end of the 23S rRNA. It is important during the early stages of 50S assembly. It makes multiple contacts with different domains of the 23S rRNA in the assembled 50S subunit and ribosome. Its function is as follows. Forms part of the polypeptide exit tunnel. The chain is Large ribosomal subunit protein uL4 from Oenococcus oeni (strain ATCC BAA-331 / PSU-1).